Consider the following 364-residue polypeptide: Dual-specificity RNA methyltransferase RlmN (364 aa).

Glutamate 91 acts as the Proton acceptor in catalysis. The Radical SAM core domain occupies glutamate 97 to aspartate 333. Residues cysteine 104 and cysteine 338 are joined by a disulfide bond. Residues cysteine 111, cysteine 115, and cysteine 118 each contribute to the [4Fe-4S] cluster site. Residues glycine 164–glutamate 165, serine 196, serine 218–histidine 220, and asparagine 295 contribute to the S-adenosyl-L-methionine site. Cysteine 338 serves as the catalytic S-methylcysteine intermediate.

It belongs to the radical SAM superfamily. RlmN family. It depends on [4Fe-4S] cluster as a cofactor.

It is found in the cytoplasm. It carries out the reaction adenosine(2503) in 23S rRNA + 2 reduced [2Fe-2S]-[ferredoxin] + 2 S-adenosyl-L-methionine = 2-methyladenosine(2503) in 23S rRNA + 5'-deoxyadenosine + L-methionine + 2 oxidized [2Fe-2S]-[ferredoxin] + S-adenosyl-L-homocysteine. The enzyme catalyses adenosine(37) in tRNA + 2 reduced [2Fe-2S]-[ferredoxin] + 2 S-adenosyl-L-methionine = 2-methyladenosine(37) in tRNA + 5'-deoxyadenosine + L-methionine + 2 oxidized [2Fe-2S]-[ferredoxin] + S-adenosyl-L-homocysteine. Its function is as follows. Specifically methylates position 2 of adenine 2503 in 23S rRNA and position 2 of adenine 37 in tRNAs. m2A2503 modification seems to play a crucial role in the proofreading step occurring at the peptidyl transferase center and thus would serve to optimize ribosomal fidelity. The protein is Dual-specificity RNA methyltransferase RlmN of Neisseria meningitidis serogroup C / serotype 2a (strain ATCC 700532 / DSM 15464 / FAM18).